Reading from the N-terminus, the 100-residue chain is Aspartyl/glutamyl-tRNA(Asn/Gln) amidotransferase subunit C (100 aa).

This sequence belongs to the GatC family. Heterotrimer of A, B and C subunits.

It carries out the reaction L-glutamyl-tRNA(Gln) + L-glutamine + ATP + H2O = L-glutaminyl-tRNA(Gln) + L-glutamate + ADP + phosphate + H(+). The catalysed reaction is L-aspartyl-tRNA(Asn) + L-glutamine + ATP + H2O = L-asparaginyl-tRNA(Asn) + L-glutamate + ADP + phosphate + 2 H(+). Allows the formation of correctly charged Asn-tRNA(Asn) or Gln-tRNA(Gln) through the transamidation of misacylated Asp-tRNA(Asn) or Glu-tRNA(Gln) in organisms which lack either or both of asparaginyl-tRNA or glutaminyl-tRNA synthetases. The reaction takes place in the presence of glutamine and ATP through an activated phospho-Asp-tRNA(Asn) or phospho-Glu-tRNA(Gln). The protein is Aspartyl/glutamyl-tRNA(Asn/Gln) amidotransferase subunit C of Dictyoglomus turgidum (strain DSM 6724 / Z-1310).